Reading from the N-terminus, the 1506-residue chain is ABC transporter C family member 9 (1506 aa).

The next 11 membrane-spanning stretches (helical) occupy residues 37–57, 84–104, 116–136, 150–170, 179–199, 315–335, 350–370, 427–447, 452–472, 541–561, and 567–587; these read MQVTFLAFFLIHLALKWFGVV, ISLLCSVSILGTHCFILLLLF, VSVFSAEVSQSFSWLFVSVVV, MLRSWWLCSFILSFSFDAHFI, FQDYADLTGLLASLFLLAVSI, AINAVFAVVNASTAYIGPYLI, LNHGYLLALGFLTAKIVETVT, FIWYVNNIWMLPIQIFSAIYI, LGLGALAALVTTLMVMACNYP, FILWGAPSLISVVTFVTCMLM, and AGAVLSALATFQMLQSPIFGL. Residues 314–596 form the ABC transmembrane type-1 1 domain; sequence AAINAVFAVV…LPDLLSALVQ (283 aa). The ABC transporter 1 domain maps to 630–853; the sequence is VEIENGAFSW…NIGFEVLVGA (224 aa). 665–672 serves as a coordination point for ATP; that stretch reads GAVGSGKS. The next 5 membrane-spanning stretches (helical) occupy residues 934-956, 976-996, 1048-1068, 1167-1187, and 1191-1211; these read LLVPFIILAQSCFQMLQIASNYW, ILLVYALLAAGSSLCVLARTI, MAVKLGWCAFSIIQIVGTIFV, LSHFVFAFSLVLLVTLPEGVI, and IAGLGVTYGLSLNVLQATVIW. The ABC transmembrane type-1 2 domain maps to 936–1218; sequence VPFIILAQSC…VIWNICNAEN (283 aa). Residues 1257–1489 form the ABC transporter 2 domain; it reads FRDLQVRYAE…EDSFFSKLIK (233 aa). Residue 1289-1296 participates in ATP binding; the sequence is GRTGSGKS.

This sequence belongs to the ABC transporter superfamily. ABCC family. Conjugate transporter (TC 3.A.1.208) subfamily. Ubiquitous.

It localises to the membrane. The catalysed reaction is ATP + H2O + xenobioticSide 1 = ADP + phosphate + xenobioticSide 2.. In terms of biological role, pump for glutathione S-conjugates. This chain is ABC transporter C family member 9 (ABCC9), found in Arabidopsis thaliana (Mouse-ear cress).